Here is a 396-residue protein sequence, read N- to C-terminus: Ribosomal RNA large subunit methyltransferase I (396 aa).

Residues 2–81 (SVRLVLAKGR…ESIDIAFFTR (80 aa)) enclose the PUA domain.

Belongs to the methyltransferase superfamily. RlmI family.

The protein localises to the cytoplasm. The enzyme catalyses cytidine(1962) in 23S rRNA + S-adenosyl-L-methionine = 5-methylcytidine(1962) in 23S rRNA + S-adenosyl-L-homocysteine + H(+). In terms of biological role, specifically methylates the cytosine at position 1962 (m5C1962) of 23S rRNA. In Escherichia coli O1:K1 / APEC, this protein is Ribosomal RNA large subunit methyltransferase I.